The sequence spans 668 residues: MNQIHSTILKKGILNIKPQIRNITKCTNTINYNNNNINNRYFTSINKNKNIENLLQQQPQQQPQQQLQQQPILFVQNQNNINYFKREYTNIGGTSPNRQSVPENSTTKTTATATVETDNVVNSSTTFTLPKEVEEEIIDKNERGKEQEQENKQQKEQKDDNKSGSIFSIKGWLTISILSVLALGTKLVIDPPQNIDKLDLAFIRNLRVLYAGFKITFYYKYYLMGLNRGDEGFAENIQIAHKLAAKAMVDLCYQNKGIFIKVAQIIASLDHILPQEYIKSLSIFQDHAPFVTFEEVEKLFKIETGKHPDDMFIDFERLPINSASLAQVHKAKLKLENDEIIEVAVKVQYPGLMNKFQKDMDSLDNVLTYITLFFPSFQFSWILGEASSCLSQELDFVNEAKNSEKMKQLFIGNQQLSIPKVYWNHTTKRILTMEFIHGVRIDNREGLDKLGIDLKELYYLFSDIFAQQIFVHGFLHSDPHPGNLLVRKTPNGKPDLVLLDHGLYKKIDENVRLDFCHLWKSLCLGDAKTSEFYAERLGAGIYAKHLGILLNLNPSKSRENLRNMKRELKDQTLVVINEILKNLPKEILLVLKTNNLIRQITTHFGIENGFLNMAKTCIKGIYTGNDIITKLKYYLTLCIFNIEIKVIDFIKKRKPPQVEIPSTYHHHH.

2 disordered regions span residues 88-111 and 132-162; these read YTNIGGTSPNRQSVPENSTTKTTA and EVEEEIIDKNERGKEQEQENKQQKEQKDDNK. Residues 91–105 show a composition bias toward polar residues; it reads IGGTSPNRQSVPENS. Positions 131–163 form a coiled coil; it reads KEVEEEIIDKNERGKEQEQENKQQKEQKDDNKS. Over residues 138–162 the composition is skewed to basic and acidic residues; it reads IDKNERGKEQEQENKQQKEQKDDNK. In terms of domain architecture, Protein kinase spans 314–668; that stretch reads DFERLPINSA…EIPSTYHHHH (355 aa). Residues 320–328 and Lys346 contribute to the ATP site; that span reads INSASLAQV. The active-site Proton acceptor is Asp478.

This sequence belongs to the protein kinase superfamily. ADCK protein kinase family.

The polypeptide is Probable serine/threonine-protein kinase abkB (abkB) (Dictyostelium discoideum (Social amoeba)).